A 518-amino-acid chain; its full sequence is ATP synthase F(1) complex catalytic subunit beta, mitochondrial (518 aa).

Positions 199, 200, 201, 202, 203, and 204 each coordinate ADP. Glycine 199 contributes to the ATP binding site. Phosphate is bound by residues glycine 199, valine 200, glycine 201, lysine 202, and threonine 203. Positions 201, 202, 203, and 204 each coordinate ATP. Residue threonine 203 participates in Mg(2+) binding. Residue glutamate 228 participates in Mg(2+) binding. ATP is bound at residue arginine 229.

It belongs to the ATPase alpha/beta chains family. Homotrimer. Component of the ATP synthase complex composed at least of ATP5F1A/subunit alpha, ATP5F1B/subunit beta, ATP5MC1/subunit c (homooctomer), MT-ATP6/subunit a, MT-ATP8/subunit 8, ATP5ME/subunit e, ATP5MF/subunit f, ATP5MG/subunit g, ATP5MK/subunit k, ATP5MJ/subunit j, ATP5F1C/subunit gamma, ATP5F1D/subunit delta, ATP5F1E/subunit epsilon, ATP5PF/subunit F6, ATP5PB/subunit b, ATP5PD/subunit d, ATP5PO/subunit OSCP. ATP synthase complex consists of a soluble F(1) head domain (subunits alpha(3) and beta(3)) - the catalytic core - and a membrane F(0) domain - the membrane proton channel (subunits c, a, 8, e, f, g, k and j). These two domains are linked by a central stalk (subunits gamma, delta, and epsilon) rotating inside the F1 region and a stationary peripheral stalk (subunits F6, b, d, and OSCP).

It is found in the mitochondrion inner membrane. The catalysed reaction is ATP + H2O + 4 H(+)(in) = ADP + phosphate + 5 H(+)(out). Catalytic subunit beta, of the mitochondrial membrane ATP synthase complex (F(1)F(0) ATP synthase or Complex V) that produces ATP from ADP in the presence of a proton gradient across the membrane which is generated by electron transport complexes of the respiratory chain. ATP synthase complex consist of a soluble F(1) head domain - the catalytic core - and a membrane F(1) domain - the membrane proton channel. These two domains are linked by a central stalk rotating inside the F(1) region and a stationary peripheral stalk. During catalysis, ATP synthesis in the catalytic domain of F(1) is coupled via a rotary mechanism of the central stalk subunits to proton translocation. In vivo, can only synthesize ATP although its ATP hydrolase activity can be activated artificially in vitro. With the subunit alpha (ATP5F1A), forms the catalytic core in the F(1) domain. The protein is ATP synthase F(1) complex catalytic subunit beta, mitochondrial of Cyprinus carpio (Common carp).